The chain runs to 450 residues: ATP-dependent protease ATPase subunit HslU (450 aa).

Residues V29, 71–76 (GVGKTE), D261, E328, and R400 contribute to the ATP site.

It belongs to the ClpX chaperone family. HslU subfamily. A double ring-shaped homohexamer of HslV is capped on each side by a ring-shaped HslU homohexamer. The assembly of the HslU/HslV complex is dependent on binding of ATP.

It is found in the cytoplasm. Functionally, ATPase subunit of a proteasome-like degradation complex; this subunit has chaperone activity. The binding of ATP and its subsequent hydrolysis by HslU are essential for unfolding of protein substrates subsequently hydrolyzed by HslV. HslU recognizes the N-terminal part of its protein substrates and unfolds these before they are guided to HslV for hydrolysis. The sequence is that of ATP-dependent protease ATPase subunit HslU from Rickettsia peacockii (strain Rustic).